Here is a 460-residue protein sequence, read N- to C-terminus: Light-independent protochlorophyllide reductase subunit N (460 aa).

3 residues coordinate [4Fe-4S] cluster: C20, C45, and C105.

It belongs to the BchN/ChlN family. As to quaternary structure, protochlorophyllide reductase is composed of three subunits; ChlL, ChlN and ChlB. Forms a heterotetramer of two ChlB and two ChlN subunits. [4Fe-4S] cluster serves as cofactor.

Its subcellular location is the plastid. It localises to the chloroplast. The catalysed reaction is chlorophyllide a + oxidized 2[4Fe-4S]-[ferredoxin] + 2 ADP + 2 phosphate = protochlorophyllide a + reduced 2[4Fe-4S]-[ferredoxin] + 2 ATP + 2 H2O. It functions in the pathway porphyrin-containing compound metabolism; chlorophyll biosynthesis (light-independent). Its function is as follows. Component of the dark-operative protochlorophyllide reductase (DPOR) that uses Mg-ATP and reduced ferredoxin to reduce ring D of protochlorophyllide (Pchlide) to form chlorophyllide a (Chlide). This reaction is light-independent. The NB-protein (ChlN-ChlB) is the catalytic component of the complex. The protein is Light-independent protochlorophyllide reductase subunit N of Adiantum capillus-veneris (Maidenhair fern).